Reading from the N-terminus, the 180-residue chain is dCTP deaminase, dUMP-forming (180 aa).

DCTP is bound by residues arginine 96–arginine 101, aspartate 113, threonine 121–glutamate 123, glutamine 142, tyrosine 156, and glutamine 163. The active-site Proton donor/acceptor is the glutamate 123.

The protein belongs to the dCTP deaminase family. As to quaternary structure, homotrimer.

The catalysed reaction is dCTP + 2 H2O = dUMP + NH4(+) + diphosphate. It functions in the pathway pyrimidine metabolism; dUMP biosynthesis; dUMP from dCTP: step 1/1. Bifunctional enzyme that catalyzes both the deamination of dCTP to dUTP and the hydrolysis of dUTP to dUMP without releasing the toxic dUTP intermediate. This is dCTP deaminase, dUMP-forming from Aquifex aeolicus (strain VF5).